The following is a 149-amino-acid chain: Transcriptional repressor NrdR (149 aa).

A zinc finger spans residues 3-34; sequence CPFCFAVDTKVIDSRLVGEGSSVRRRRQCLVC. The 91-residue stretch at 49–139 folds into the ATP-cone domain; sequence PRVVKSNDVR…VYRSFEDIKE (91 aa).

Belongs to the NrdR family. The cofactor is Zn(2+).

Negatively regulates transcription of bacterial ribonucleotide reductase nrd genes and operons by binding to NrdR-boxes. This Escherichia fergusonii (strain ATCC 35469 / DSM 13698 / CCUG 18766 / IAM 14443 / JCM 21226 / LMG 7866 / NBRC 102419 / NCTC 12128 / CDC 0568-73) protein is Transcriptional repressor NrdR.